A 531-amino-acid chain; its full sequence is Peptide chain release factor 3 (531 aa).

The 269-residue stretch at 10–278 folds into the tr-type G domain; sequence RRRRTFAIIS…SLIDWAPAPK (269 aa). GTP is bound by residues 19–26, 87–91, and 141–144; these read SHPDAGKT, DTPGH, and NKYD.

Belongs to the TRAFAC class translation factor GTPase superfamily. Classic translation factor GTPase family. PrfC subfamily.

It localises to the cytoplasm. Its function is as follows. Increases the formation of ribosomal termination complexes and stimulates activities of RF-1 and RF-2. It binds guanine nucleotides and has strong preference for UGA stop codons. It may interact directly with the ribosome. The stimulation of RF-1 and RF-2 is significantly reduced by GTP and GDP, but not by GMP. The sequence is that of Peptide chain release factor 3 from Neisseria gonorrhoeae (strain ATCC 700825 / FA 1090).